The chain runs to 570 residues: Proline--tRNA ligase (570 aa).

The protein belongs to the class-II aminoacyl-tRNA synthetase family. ProS type 1 subfamily. In terms of assembly, homodimer.

The protein localises to the cytoplasm. It carries out the reaction tRNA(Pro) + L-proline + ATP = L-prolyl-tRNA(Pro) + AMP + diphosphate. Catalyzes the attachment of proline to tRNA(Pro) in a two-step reaction: proline is first activated by ATP to form Pro-AMP and then transferred to the acceptor end of tRNA(Pro). As ProRS can inadvertently accommodate and process non-cognate amino acids such as alanine and cysteine, to avoid such errors it has two additional distinct editing activities against alanine. One activity is designated as 'pretransfer' editing and involves the tRNA(Pro)-independent hydrolysis of activated Ala-AMP. The other activity is designated 'posttransfer' editing and involves deacylation of mischarged Ala-tRNA(Pro). The misacylated Cys-tRNA(Pro) is not edited by ProRS. The sequence is that of Proline--tRNA ligase from Geobacter metallireducens (strain ATCC 53774 / DSM 7210 / GS-15).